The chain runs to 366 residues: Phospho-N-acetylmuramoyl-pentapeptide-transferase (366 aa).

10 consecutive transmembrane segments (helical) span residues 25–45, 70–90, 93–113, 134–154, 174–194, 205–225, 245–265, 268–288, 297–317, and 343–363; these read AGAA…AIIN, GTPT…SLLW, LSNV…AIGF, LGIE…MALA, FVIN…VGAG, GLAI…AYLA, LAVI…FNAP, AIFM…SIAV, VIVG…VFWF, and QVVI…LATL.

Belongs to the glycosyltransferase 4 family. MraY subfamily. Requires Mg(2+) as cofactor.

It is found in the cell inner membrane. The enzyme catalyses UDP-N-acetyl-alpha-D-muramoyl-L-alanyl-gamma-D-glutamyl-meso-2,6-diaminopimeloyl-D-alanyl-D-alanine + di-trans,octa-cis-undecaprenyl phosphate = di-trans,octa-cis-undecaprenyl diphospho-N-acetyl-alpha-D-muramoyl-L-alanyl-D-glutamyl-meso-2,6-diaminopimeloyl-D-alanyl-D-alanine + UMP. The protein operates within cell wall biogenesis; peptidoglycan biosynthesis. Its function is as follows. Catalyzes the initial step of the lipid cycle reactions in the biosynthesis of the cell wall peptidoglycan: transfers peptidoglycan precursor phospho-MurNAc-pentapeptide from UDP-MurNAc-pentapeptide onto the lipid carrier undecaprenyl phosphate, yielding undecaprenyl-pyrophosphoryl-MurNAc-pentapeptide, known as lipid I. This chain is Phospho-N-acetylmuramoyl-pentapeptide-transferase, found in Agrobacterium fabrum (strain C58 / ATCC 33970) (Agrobacterium tumefaciens (strain C58)).